The sequence spans 157 residues: MKAVFSGSFDPITLGHVDIVTRAAELIDEVVVGVAVNSAKNGIFSMDERVAFVKDAVADIPGVEVALVDGLLVDFCTEMGADAIIRGLRFGGDFDYELQMAHLNKAMSGIETILLPAGREFGTISSSMIRSAACNGGNVSEFVPGMVNTALHERFPH.

Ser-8 serves as a coordination point for substrate. Residues 8–9 and His-16 each bind ATP; that span reads SF. 3 residues coordinate substrate: Lys-40, Leu-72, and Arg-86. ATP is bound by residues 87–89, Glu-97, and 121–127; these read GLR and FGTISSS.

The protein belongs to the bacterial CoaD family. Homohexamer. Mg(2+) is required as a cofactor.

The protein resides in the cytoplasm. It carries out the reaction (R)-4'-phosphopantetheine + ATP + H(+) = 3'-dephospho-CoA + diphosphate. It functions in the pathway cofactor biosynthesis; coenzyme A biosynthesis; CoA from (R)-pantothenate: step 4/5. Functionally, reversibly transfers an adenylyl group from ATP to 4'-phosphopantetheine, yielding dephospho-CoA (dPCoA) and pyrophosphate. In Cutibacterium acnes (strain DSM 16379 / KPA171202) (Propionibacterium acnes), this protein is Phosphopantetheine adenylyltransferase.